We begin with the raw amino-acid sequence, 731 residues long: DNA ligase (731 aa).

NAD(+) is bound by residues 47–51, 96–97, and E133; these read DAEYD and SI. The active-site N6-AMP-lysine intermediate is K135. NAD(+) contacts are provided by R156, E192, K313, and K337. 4 residues coordinate Zn(2+): C462, C465, C480, and C486. The 87-residue stretch at 645 to 731 folds into the BRCT domain; that stretch reads AATLPLAGMT…RGTPPNAGGA (87 aa).

The protein belongs to the NAD-dependent DNA ligase family. LigA subfamily. The cofactor is Mg(2+). Mn(2+) is required as a cofactor.

The catalysed reaction is NAD(+) + (deoxyribonucleotide)n-3'-hydroxyl + 5'-phospho-(deoxyribonucleotide)m = (deoxyribonucleotide)n+m + AMP + beta-nicotinamide D-nucleotide.. Functionally, DNA ligase that catalyzes the formation of phosphodiester linkages between 5'-phosphoryl and 3'-hydroxyl groups in double-stranded DNA using NAD as a coenzyme and as the energy source for the reaction. It is essential for DNA replication and repair of damaged DNA. This is DNA ligase from Acidovorax sp. (strain JS42).